Reading from the N-terminus, the 323-residue chain is tRNA U34 carboxymethyltransferase (323 aa).

Carboxy-S-adenosyl-L-methionine is bound by residues Lys-91, Trp-105, Lys-110, Gly-130, 152 to 154 (DPS), 181 to 182 (IE), Met-196, Tyr-200, and Arg-315.

This sequence belongs to the class I-like SAM-binding methyltransferase superfamily. CmoB family. Homotetramer.

It carries out the reaction carboxy-S-adenosyl-L-methionine + 5-hydroxyuridine(34) in tRNA = 5-carboxymethoxyuridine(34) in tRNA + S-adenosyl-L-homocysteine + H(+). In terms of biological role, catalyzes carboxymethyl transfer from carboxy-S-adenosyl-L-methionine (Cx-SAM) to 5-hydroxyuridine (ho5U) to form 5-carboxymethoxyuridine (cmo5U) at position 34 in tRNAs. The sequence is that of tRNA U34 carboxymethyltransferase from Vibrio campbellii (strain ATCC BAA-1116).